The sequence spans 84 residues: RNA-binding protein Hfq (84 aa).

The 61-residue stretch at 10–70 (DLFLNVLRRD…ISTIMPFRPV (61 aa)) folds into the Sm domain.

It belongs to the Hfq family. In terms of assembly, homohexamer.

Functionally, RNA chaperone that binds small regulatory RNA (sRNAs) and mRNAs to facilitate mRNA translational regulation in response to envelope stress, environmental stress and changes in metabolite concentrations. Also binds with high specificity to tRNAs. This is RNA-binding protein Hfq from Moorella thermoacetica (strain ATCC 39073 / JCM 9320).